We begin with the raw amino-acid sequence, 328 residues long: Malate dehydrogenase (328 aa).

An NAD(+)-binding site is contributed by 12–18 (GAAGQIA). Substrate is bound by residues R93 and R99. NAD(+) is bound by residues N106, Q113, and 130 to 132 (VGN). Residues N132 and R163 each coordinate substrate. The active-site Proton acceptor is H188.

The protein belongs to the LDH/MDH superfamily. MDH type 2 family.

The enzyme catalyses (S)-malate + NAD(+) = oxaloacetate + NADH + H(+). Its function is as follows. Catalyzes the reversible oxidation of malate to oxaloacetate. This is Malate dehydrogenase from Burkholderia cenocepacia (strain HI2424).